A 144-amino-acid chain; its full sequence is Large ribosomal subunit protein uL11 (144 aa).

Belongs to the universal ribosomal protein uL11 family. As to quaternary structure, part of the ribosomal stalk of the 50S ribosomal subunit. Interacts with L10 and the large rRNA to form the base of the stalk. L10 forms an elongated spine to which L12 dimers bind in a sequential fashion forming a multimeric L10(L12)X complex. Post-translationally, one or more lysine residues are methylated.

Its function is as follows. Forms part of the ribosomal stalk which helps the ribosome interact with GTP-bound translation factors. The chain is Large ribosomal subunit protein uL11 from Corynebacterium glutamicum (strain R).